A 73-amino-acid chain; its full sequence is UPF0235 protein HY04AAS1_1378 (73 aa).

The protein belongs to the UPF0235 family.

This chain is UPF0235 protein HY04AAS1_1378, found in Hydrogenobaculum sp. (strain Y04AAS1).